The following is a 629-amino-acid chain: Filament-like plant protein 2 (629 aa).

2 coiled-coil regions span residues 34 to 61 and 102 to 171; these read WEKAENEVVELKQKLEDAADKNIVLEDR and NTGL…LEAE. Positions 186-205 are disordered; it reads SSNQSVDSHSDGGRERVEGS. The segment covering 193-203 has biased composition (basic and acidic residues); the sequence is SHSDGGRERVE. A coiled-coil region spans residues 270–493; sequence ELSLMEKLEK…IEEKTMIKRE (224 aa).

This sequence belongs to the FPP family. In terms of assembly, interacts with WPP/MAF proteins. Binds to COG2; this interaction promotes the association between cortical microtubules and EXO70A1. In terms of tissue distribution, accumulates in preferentially xylem cells.

The protein resides in the vesicle. In terms of biological role, ensures, when in complex with FPP3/VETH1 and COG2, the correct secondary cell wall (SCW) deposition pattern by recruiting exocyst components to cortical microtubules in xylem cells during secondary cell wall deposition by recruiting EXO70A1. In Arabidopsis thaliana (Mouse-ear cress), this protein is Filament-like plant protein 2.